Consider the following 104-residue polypeptide: UPF0145 protein DET1617 (104 aa).

Belongs to the UPF0145 family.

The sequence is that of UPF0145 protein DET1617 from Dehalococcoides mccartyi (strain ATCC BAA-2266 / KCTC 15142 / 195) (Dehalococcoides ethenogenes (strain 195)).